Reading from the N-terminus, the 722-residue chain is Polyribonucleotide nucleotidyltransferase (722 aa).

The Mg(2+) site is built by aspartate 498 and aspartate 504. The KH domain occupies 565–624; sequence PQFHTMKIDPDKIRDIIGKGGATIRSITEETGASIDIDDNGTIKIYADDGDGMQAAIARI. Residues 634-702 form the S1 motif domain; sequence GAVYQGKVVR…QRGRIKLSIK (69 aa).

The protein belongs to the polyribonucleotide nucleotidyltransferase family. As to quaternary structure, component of the RNA degradosome, which is a multiprotein complex involved in RNA processing and mRNA degradation. Mg(2+) is required as a cofactor.

The protein resides in the cytoplasm. The catalysed reaction is RNA(n+1) + phosphate = RNA(n) + a ribonucleoside 5'-diphosphate. Involved in mRNA degradation. Catalyzes the phosphorolysis of single-stranded polyribonucleotides processively in the 3'- to 5'-direction. In Saccharophagus degradans (strain 2-40 / ATCC 43961 / DSM 17024), this protein is Polyribonucleotide nucleotidyltransferase.